The sequence spans 195 residues: 3-isopropylmalate dehydratase small subunit (195 aa).

It belongs to the LeuD family. LeuD type 1 subfamily. Heterodimer of LeuC and LeuD.

The enzyme catalyses (2R,3S)-3-isopropylmalate = (2S)-2-isopropylmalate. It participates in amino-acid biosynthesis; L-leucine biosynthesis; L-leucine from 3-methyl-2-oxobutanoate: step 2/4. Functionally, catalyzes the isomerization between 2-isopropylmalate and 3-isopropylmalate, via the formation of 2-isopropylmaleate. The protein is 3-isopropylmalate dehydratase small subunit of Frankia alni (strain DSM 45986 / CECT 9034 / ACN14a).